The primary structure comprises 197 residues: Beta-crystallin A2 (197 aa).

The interval 1–11 (MSSAPAQGPAP) is N-terminal arm. Beta/gamma crystallin 'Greek key' domains lie at 12 to 52 (ASLT…KVEN) and 53 to 99 (GAWV…RPVL). A connecting peptide region spans residues 100–105 (CANHSD). Beta/gamma crystallin 'Greek key' domains follow at residues 106–147 (SRVT…KVSS) and 148–196 (GAWV…RRVQ).

The protein belongs to the beta/gamma-crystallin family. In terms of assembly, homo/heterodimer, or complexes of higher-order. The structure of beta-crystallin oligomers seems to be stabilized through interactions between the N-terminal arms.

Its function is as follows. Crystallins are the dominant structural components of the vertebrate eye lens. This Bos taurus (Bovine) protein is Beta-crystallin A2 (CRYBA2).